A 37-amino-acid chain; its full sequence is Cytochrome b6-f complex subunit 5 (37 aa).

A helical membrane pass occupies residues 5-25 (LLSGIVLGLIPITLAGLFVTA).

The protein belongs to the PetG family. The 4 large subunits of the cytochrome b6-f complex are cytochrome b6, subunit IV (17 kDa polypeptide, PetD), cytochrome f and the Rieske protein, while the 4 small subunits are PetG, PetL, PetM and PetN. The complex functions as a dimer.

It localises to the plastid. Its subcellular location is the chloroplast thylakoid membrane. In terms of biological role, component of the cytochrome b6-f complex, which mediates electron transfer between photosystem II (PSII) and photosystem I (PSI), cyclic electron flow around PSI, and state transitions. PetG is required for either the stability or assembly of the cytochrome b6-f complex. This Zygnema circumcarinatum (Green alga) protein is Cytochrome b6-f complex subunit 5.